The chain runs to 224 residues: BOS complex subunit TMEM147 (224 aa).

The helical transmembrane segment at 1-21 (MTLFHFGNCFALAYFPYFITY) threads the bilayer. The Cytoplasmic portion of the chain corresponds to 22 to 34 (KCSGLSEYNAFWK). The chain crosses the membrane as a helical span at residues 35-58 (CVQAGVTYLFVQLCKMLFLATFFP). At 59 to 66 (TWEGGIYD) the chain is on the lumenal side. A helical transmembrane segment spans residues 67 to 88 (FIGEFMKASVDVADLIGLNLVM). Residues 89-98 (SRNAGKGEYK) lie on the Cytoplasmic side of the membrane. Residues 99 to 124 (IMVAALGWATAELIMSRCIPLWVGAR) traverse the membrane as a helical segment. At 125 to 129 (GIEFD) the chain is on the lumenal side. The helical transmembrane segment at 130-155 (WKYIQMSIDSNISLVHYIVASAQVWM) threads the bilayer. At 156–164 (ITRYDLYHT) the chain is on the cytoplasmic side. The helical transmembrane segment at 165-187 (FRPAVLLLMFLSVYKAFVMETFV) threads the bilayer. The Lumenal segment spans residues 188–194 (HLCSLGS). Residues 195–216 (WAALLARAVVTGLLALSTLALY) form a helical membrane-spanning segment. Residues 217–224 (VAVVNVHS) lie on the Cytoplasmic side of the membrane.

Belongs to the TMEM147 family. In terms of assembly, component of the back of Sec61 (BOS) complex, composed of NCLN/Nicalin, NOMO (NOMO1, NOMO2 or NOMO3) and TMEM147. The BOS complex is part of the multi-pass translocon (MPT) complex, composed of three subcomplexes, the GEL complex (composed of RAB5IF/OPTI and TMCO1), the BOS complex (composed of NCLN/Nicalin, NOMO and TMEM147) and the PAT complex (composed of WDR83OS/Asterix and CCDC47). The MPT complex associates with the SEC61 complex. Interacts with CHRM3, CHRM1 and AVPR2. Interacts with LBR; promoting LBR localization to the nucleus inner membrane. Interacts with DHCR7.

It localises to the endoplasmic reticulum membrane. It is found in the nucleus membrane. The protein resides in the cell membrane. In terms of biological role, component of the multi-pass translocon (MPT) complex that mediates insertion of multi-pass membrane proteins into the lipid bilayer of membranes. The MPT complex takes over after the SEC61 complex: following membrane insertion of the first few transmembrane segments of proteins by the SEC61 complex, the MPT complex occludes the lateral gate of the SEC61 complex to promote insertion of subsequent transmembrane regions. Also acts as a negative regulator of CHRM3 function, most likely by interfering with its trafficking to the cell membrane. Negatively regulates CHRM3-mediated calcium mobilization and activation of RPS6KA1/p90RSK activity. Regulates LBR localization to the nucleus inner membrane. In Homo sapiens (Human), this protein is BOS complex subunit TMEM147.